Here is a 968-residue protein sequence, read N- to C-terminus: RNA polymerase-associated protein RapA (968 aa).

The Helicase ATP-binding domain maps to 163-332 (EVGRRYAPRV…FARLRLLDPD (170 aa)). Position 176-183 (176-183 (DEVGLGKT)) interacts with ATP. The DEAH box motif lies at 278 to 281 (DEAH). The Helicase C-terminal domain maps to 491-643 (RVDWLIAFLK…ELTCPSGHVL (153 aa)).

Belongs to the SNF2/RAD54 helicase family. RapA subfamily. Interacts with the RNAP. Has a higher affinity for the core RNAP than for the holoenzyme. Its ATPase activity is stimulated by binding to RNAP.

Its function is as follows. Transcription regulator that activates transcription by stimulating RNA polymerase (RNAP) recycling in case of stress conditions such as supercoiled DNA or high salt concentrations. Probably acts by releasing the RNAP, when it is trapped or immobilized on tightly supercoiled DNA. Does not activate transcription on linear DNA. Probably not involved in DNA repair. The polypeptide is RNA polymerase-associated protein RapA (Shewanella sp. (strain W3-18-1)).